Reading from the N-terminus, the 277-residue chain is 4-hydroxy-3-methylbut-2-enyl diphosphate reductase (277 aa).

[4Fe-4S] cluster is bound at residue Cys-12. Residues His-36 and His-70 each contribute to the (2E)-4-hydroxy-3-methylbut-2-enyl diphosphate site. 2 residues coordinate dimethylallyl diphosphate: His-36 and His-70. Positions 36 and 70 each coordinate isopentenyl diphosphate. Cys-92 lines the [4Fe-4S] cluster pocket. (2E)-4-hydroxy-3-methylbut-2-enyl diphosphate is bound at residue His-120. A dimethylallyl diphosphate-binding site is contributed by His-120. Residue His-120 coordinates isopentenyl diphosphate. Glu-122 acts as the Proton donor in catalysis. Thr-158 lines the (2E)-4-hydroxy-3-methylbut-2-enyl diphosphate pocket. Position 186 (Cys-186) interacts with [4Fe-4S] cluster. Residues Ser-214, Asn-216, and Ser-258 each coordinate (2E)-4-hydroxy-3-methylbut-2-enyl diphosphate. Residues Ser-214, Asn-216, and Ser-258 each coordinate dimethylallyl diphosphate. Residues Ser-214, Asn-216, and Ser-258 each contribute to the isopentenyl diphosphate site.

The protein belongs to the IspH family. The cofactor is [4Fe-4S] cluster.

The enzyme catalyses isopentenyl diphosphate + 2 oxidized [2Fe-2S]-[ferredoxin] + H2O = (2E)-4-hydroxy-3-methylbut-2-enyl diphosphate + 2 reduced [2Fe-2S]-[ferredoxin] + 2 H(+). It catalyses the reaction dimethylallyl diphosphate + 2 oxidized [2Fe-2S]-[ferredoxin] + H2O = (2E)-4-hydroxy-3-methylbut-2-enyl diphosphate + 2 reduced [2Fe-2S]-[ferredoxin] + 2 H(+). The protein operates within isoprenoid biosynthesis; dimethylallyl diphosphate biosynthesis; dimethylallyl diphosphate from (2E)-4-hydroxy-3-methylbutenyl diphosphate: step 1/1. It participates in isoprenoid biosynthesis; isopentenyl diphosphate biosynthesis via DXP pathway; isopentenyl diphosphate from 1-deoxy-D-xylulose 5-phosphate: step 6/6. Its function is as follows. Catalyzes the conversion of 1-hydroxy-2-methyl-2-(E)-butenyl 4-diphosphate (HMBPP) into a mixture of isopentenyl diphosphate (IPP) and dimethylallyl diphosphate (DMAPP). Acts in the terminal step of the DOXP/MEP pathway for isoprenoid precursor biosynthesis. In Campylobacter jejuni subsp. jejuni serotype O:23/36 (strain 81-176), this protein is 4-hydroxy-3-methylbut-2-enyl diphosphate reductase.